A 510-amino-acid chain; its full sequence is Serine/threonine protein phosphatase 2A 59 kDa regulatory subunit B' eta isoform (510 aa).

The disordered stretch occupies residues 1–87 (MWKQILSKLP…NNNNNNNNGV (87 aa)). Residues 10 to 19 (PNKKSSKHEH) are compositionally biased toward basic residues. The span at 27–42 (HSSSSSHTSGASTSKS) shows a compositional bias: low complexity.

Belongs to the phosphatase 2A regulatory subunit B56 family. As to quaternary structure, PP2A consists of a common heteromeric enzyme, composed of a catalytic subunit (subunits C), a constant regulatory subunit (subunit A), and a variety of regulatory subunits such as subunits B (the R2/B/PR55/B55, R3/B''/PR72/PR130/PR59 and R5/B'/B56 families). Interacts with BZR1. Interacts with BRI1.

It localises to the nucleus. The protein resides in the nucleolus. It is found in the cytoplasm. Functionally, the B regulatory subunit may modulate substrate selectivity and catalytic activity, and may also direct the localization of the catalytic enzyme to a particular subcellular compartment. The holoenzyme composed of PP2AA1, PP2A4 and B'ETA acts as negative regulator of plant innate immunity by controlling BAK1 phosphorylation state and activation in surface-localized immune receptor complexes. Required for the formation of the PP2A holoenzyme that negatively regulates brassinosteroid signaling by dephosphorylating and inactivating BRI1 in the cytoplasm. This Arabidopsis thaliana (Mouse-ear cress) protein is Serine/threonine protein phosphatase 2A 59 kDa regulatory subunit B' eta isoform (B'ETA).